The following is a 4249-amino-acid chain: Fibrocystin-L (4249 aa).

The signal sequence occupies residues 1-20 (MGHLWLSGTWFLFGLLWCAA). Residues 21-4222 (DSHKGSSETI…TPVQTLAVIT (4202 aa)) lie on the Extracellular side of the membrane. IPT/TIG domains are found at residues 31–132 (PKVT…GVAS), 146–255 (PTIR…KMTY), 270–361 (PEVV…ILEY), 1067–1153 (PLIL…HFIY), 1155–1234 (SQIS…SFSY), 1240–1323 (PVVT…KLNA), 1329–1468 (LEVI…SFSY), 1565–1648 (PSII…TLTK), 1658–1742 (PNID…SFSY), 1748–1827 (PYVT…NLTI), 1830–1909 (PAVA…SFTY), 1915–1996 (PFLK…AFEY), 1998–2084 (LSIQ…LFTY), and 2090–2175 (PLIT…DFLY). One can recognise a PA14 domain in the interval 337–492 (PGGRGLKVEV…NVFTEQQTGD (156 aa)). Residues threonine 1297 and threonine 1359 are each glycosylated (O-linked (GalNAc...) threonine). O-linked (GalNAc...) threonine glycosylation occurs at threonine 1838. The 121-residue stretch at 2183–2303 (SSWGGSPPPE…IPVVWTRLTH (121 aa)) folds into the G8 1 domain. 5 PbH1 repeats span residues 2484 to 2506 (QFKS…TIHN), 2507 to 2529 (THHL…FIED), 2565 to 2587 (NPNN…WYRM), 2664 to 2686 (GGAL…ETKR), and 2732 to 2755 (SQGL…ALGV). The G8 2 domain maps to 3035 to 3173 (SFWQSSPENN…HSVYKTKLLE (139 aa)). PbH1 repeat units lie at residues 3292 to 3314 (KGNA…RDST), 3354 to 3376 (TDGV…RIWG), 3415 to 3437 (GTNT…RIDG), 3470 to 3492 (PGCS…YFQT), and 3493 to 3514 (TESV…FSMV). Threonine 3735 carries an O-linked (GalNAc...) threonine glycan. Residues 4183–4208 (LSAQSVPGGSGSSPGSGSSSSGHSKA) are disordered. Residues 4197–4208 (GSGSSSSGHSKA) show a composition bias toward low complexity. The helical transmembrane segment at 4223-4243 (ACLVGRLLLLEVFMAAVFILN) threads the bilayer. Residues 4244-4249 (TTVGIN) lie on the Cytoplasmic side of the membrane.

As to expression, expressed in neurons in the hippocampus and the cerebral cortex (at protein level). Transiently expressed at high levels in inner ear hair cells, predominantly in outer hair cells, during early postnatal development (at protein level).

Its subcellular location is the membrane. The protein localises to the cell projection. It is found in the stereocilium membrane. In terms of biological role, component of hair-cell stereocilia coat. Required for normal hearing. This is Fibrocystin-L (Pkhd1l1) from Mus musculus (Mouse).